Reading from the N-terminus, the 171-residue chain is UPF0312 protein SAV2687 (171 aa).

It belongs to the UPF0312 family.

The polypeptide is UPF0312 protein SAV2687 (Staphylococcus aureus (strain Mu50 / ATCC 700699)).